Here is a 500-residue protein sequence, read N- to C-terminus: Protein DML1 (500 aa).

Belongs to the misato family.

The protein resides in the mitochondrion. Its function is as follows. Involved in the partitioning of the mitochondrial organelle and mitochondrial DNA (mtDNA) inheritance. The chain is Protein DML1 (DML1) from Scheffersomyces stipitis (strain ATCC 58785 / CBS 6054 / NBRC 10063 / NRRL Y-11545) (Yeast).